A 250-amino-acid polypeptide reads, in one-letter code: UPF0524 protein C3orf70 homolog (250 aa).

The interval 201–250 (ESCDEDTEEGAELSSEEDYSPESSWEPDECTLLSPSQSDLEVIETIETTV) is disordered. The segment covering 202-229 (SCDEDTEEGAELSSEEDYSPESSWEPDE) has biased composition (acidic residues).

The protein belongs to the UPF0524 family.

Its function is as follows. May play a role in neuronal and neurobehavioral development. This chain is UPF0524 protein C3orf70 homolog, found in Bos taurus (Bovine).